The following is an 86-amino-acid chain: MENFDKTMKFSYEEIPKEDVKSVLQNVHRTLEERGYNAVNQIVGYLLSGDPAYIPRQNEARNQIRHIDRDVIMEELVSNYLKESKN.

It belongs to the UPF0297 family.

The sequence is that of UPF0297 protein SERP1181 from Staphylococcus epidermidis (strain ATCC 35984 / DSM 28319 / BCRC 17069 / CCUG 31568 / BM 3577 / RP62A).